The following is a 698-amino-acid chain: Serine/threonine-protein kinase Nek8 (698 aa).

In terms of domain architecture, Protein kinase spans 4 to 258 (YERIRVVGRG…LSHIMAQPLC (255 aa)). ATP-binding positions include 10 to 18 (VGRGAFGIV) and Lys-33. The active-site Proton acceptor is the Asp-128. Thr-162 carries the phosphothreonine; by autocatalysis modification. The tract at residues 281–307 (LTPGTPMAPGSTGSRATSARCRGVPRG) is disordered. RCC1 repeat units follow at residues 415–466 (RGII…ALSA), 467–518 (DGEL…ILTS), 520–571 (GRVL…TLLC), 585–636 (SGAC…AIGA), and 638–689 (GEVY…LAVR).

This sequence belongs to the protein kinase superfamily. NEK Ser/Thr protein kinase family. NIMA subfamily. Interacts with PKD2; may regulate PKD2 targeting to the cilium. Interacts with ANKS6. Component of a complex containing at least ANKS6, INVS, NEK8 and NPHP3. ANKS6 may organize complex assembly by linking INVS and NPHP3 to NEK8 and INVS may target it to the proximal ciliary axoneme. Interacts with ANKS3. Mg(2+) is required as a cofactor.

The protein resides in the cytoplasm. It localises to the cytoskeleton. Its subcellular location is the cell projection. The protein localises to the cilium. It is found in the cilium axoneme. The protein resides in the microtubule organizing center. It localises to the centrosome. The enzyme catalyses L-seryl-[protein] + ATP = O-phospho-L-seryl-[protein] + ADP + H(+). It catalyses the reaction L-threonyl-[protein] + ATP = O-phospho-L-threonyl-[protein] + ADP + H(+). Functionally, required for renal tubular integrity. May regulate local cytoskeletal structure in kidney tubule epithelial cells. May regulate ciliary biogenesis through targeting of proteins to the cilia. Plays a role in organogenesis and is involved in the regulation of the Hippo signaling pathway. In Rattus norvegicus (Rat), this protein is Serine/threonine-protein kinase Nek8 (Nek8).